A 351-amino-acid polypeptide reads, in one-letter code: Uroporphyrinogen decarboxylase (351 aa).

Residues 32–36 (RQAGR), Phe51, Asp82, Tyr157, Ser211, and His326 each bind substrate.

It belongs to the uroporphyrinogen decarboxylase family. In terms of assembly, homodimer.

Its subcellular location is the cytoplasm. The enzyme catalyses uroporphyrinogen III + 4 H(+) = coproporphyrinogen III + 4 CO2. It functions in the pathway porphyrin-containing compound metabolism; protoporphyrin-IX biosynthesis; coproporphyrinogen-III from 5-aminolevulinate: step 4/4. Catalyzes the decarboxylation of four acetate groups of uroporphyrinogen III to yield coproporphyrinogen III. The chain is Uroporphyrinogen decarboxylase from Caulobacter vibrioides (strain ATCC 19089 / CIP 103742 / CB 15) (Caulobacter crescentus).